We begin with the raw amino-acid sequence, 204 residues long: Ras-related protein R-Ras2 (204 aa).

An N-acetylalanine modification is found at A2. 21 to 29 (GGGGVGKSA) contributes to the GTP binding site. The short motif at 43-51 (YDPTIEDSY) is the Effector region element. GTP contacts are provided by residues 68–72 (DTAGQ), 127–130 (NKAD), and 157–159 (SAK). The residue at position 186 (S186) is a Phosphoserine. Residues K192, K194, K196, and K197 are each lipidated (N6-palmitoyl lysine). C199 carries the S-palmitoyl cysteine lipid modification. C201 is modified (cysteine methyl ester). C201 carries the S-farnesyl cysteine lipid modification. A propeptide spans 202-204 (VIF) (removed in mature form).

This sequence belongs to the small GTPase superfamily. Ras family. In terms of assembly, interacts with RASSF5. In terms of processing, may be post-translationally modified by both palmitoylation and polyisoprenylation. Fatty-acylation at Lys-192, Lys-194; lys-196 and Lys-197 is required for localization to the plasma membrane and activity. Defatty-acylated by SIRT6, affecting its localization to the plasma membrane. Ubiquitously present in all tissues examined, with the highest levels in heart, placenta, and skeletal muscle. Moderate levels in lung and liver; low levels in brain, kidney, and pancreas.

It is found in the cell membrane. Its subcellular location is the golgi apparatus membrane. It carries out the reaction GTP + H2O = GDP + phosphate + H(+). In terms of biological role, GTP-binding protein with GTPase activity, involved in the regulation of MAPK signaling pathway and thereby controlling multiple cellular processes. Regulates craniofacial development. The protein is Ras-related protein R-Ras2 of Homo sapiens (Human).